The following is a 98-amino-acid chain: Flagellar hook-basal body complex protein FliE (98 aa).

The segment at 22-56 (KTDNATGAGNTFTQMLDSMSDTQSNAQTSVSNLLT) is disordered. Positions 23–56 (TDNATGAGNTFTQMLDSMSDTQSNAQTSVSNLLT) are enriched in polar residues.

This sequence belongs to the FliE family.

The protein localises to the bacterial flagellum basal body. The chain is Flagellar hook-basal body complex protein FliE from Listeria innocua serovar 6a (strain ATCC BAA-680 / CLIP 11262).